The primary structure comprises 541 residues: Protein MGF 505-10R (541 aa).

It belongs to the asfivirus MGF 505 family.

Its function is as follows. Plays a role in virus cell tropism, and may be required for efficient virus replication in macrophages. This chain is Protein MGF 505-10R, found in Ornithodoros (relapsing fever ticks).